Reading from the N-terminus, the 478-residue chain is Lysosome membrane protein 2 (478 aa).

The Cytoplasmic segment spans residues 2–4; the sequence is ARC. Residues 5–27 traverse the membrane as a helical segment; that stretch reads CFYTAGTLSLLLLVTSVTLLVAR. Residues 28–433 lie on the Lumenal side of the membrane; it reads VFQKAVDQTI…QLKSVINTTL (406 aa). 4 N-linked (GlcNAc...) asparagine glycosylation sites follow: Asn45, Asn68, Asn105, and Asn122. The tract at residues 155–191 is important for interaction with GBA1; sequence IIEAMLKAYQQTLFVTHTVHELLWGYKDEVLSLVHIF. 4 N-linked (GlcNAc...) asparagine glycosylation sites follow: Asn206, Asn224, Asn249, and Asn304. Intrachain disulfides connect Cys274/Cys329 and Cys312/Cys318. 3 N-linked (GlcNAc...) asparagine glycosylation sites follow: Asn325, Asn412, and Asn430. A helical membrane pass occupies residues 434 to 459; it reads IVTNIPYIIMALGVFFGLIFTWLACR. The Cytoplasmic segment spans residues 460–478; that stretch reads GQGSTDEGTADERAPLIRT.

This sequence belongs to the CD36 family. Interacts with GBA1. Post-translationally, acylated by palmitic acid group(s).

It localises to the lysosome membrane. Acts as a lysosomal receptor for glucosylceramidase (GBA1) targeting. The protein is Lysosome membrane protein 2 (Scarb2) of Rattus norvegicus (Rat).